The sequence spans 333 residues: Eukaryotic translation initiation factor 3 subunit H-B (333 aa).

Positions 20 to 154 (IQIEGLVVMK…LKAYRLTPKL (135 aa)) constitute an MPN domain. Positions 249–295 (SKQQQQKHQYVQRRQQENAQRQSRGEPPLPEEDLTKMFKPPQPPPRM) are disordered. Residues 250–261 (KQQQQKHQYVQR) show a composition bias toward low complexity.

It belongs to the eIF-3 subunit H family. In terms of assembly, component of the eukaryotic translation initiation factor 3 (eIF-3) complex, which is composed of 13 subunits: eif3a, eif3b, eif3c, eif3d, eif3e, eif3f, eif3g, eif3h, eif3i, eif3j, eif3k, eif3l and eif3m.

The protein resides in the cytoplasm. In terms of biological role, component of the eukaryotic translation initiation factor 3 (eIF-3) complex, which is involved in protein synthesis of a specialized repertoire of mRNAs and, together with other initiation factors, stimulates binding of mRNA and methionyl-tRNAi to the 40S ribosome. The eIF-3 complex specifically targets and initiates translation of a subset of mRNAs involved in cell proliferation. The sequence is that of Eukaryotic translation initiation factor 3 subunit H-B (eif3hb) from Danio rerio (Zebrafish).